The chain runs to 173 residues: NADH-ubiquinone oxidoreductase chain 6 (173 aa).

Transmembrane regions (helical) follow at residues 1-21, 27-47, 48-68, 88-108, and 139-159; these read MTYL…AVAS, YGVV…LSLG, VSFV…VVFV, VGYG…GGLI, and YGVG…FVVL.

Belongs to the complex I subunit 6 family.

The protein resides in the mitochondrion membrane. It carries out the reaction a ubiquinone + NADH + 5 H(+)(in) = a ubiquinol + NAD(+) + 4 H(+)(out). Core subunit of the mitochondrial membrane respiratory chain NADH dehydrogenase (Complex I) that is believed to belong to the minimal assembly required for catalysis. Complex I functions in the transfer of electrons from NADH to the respiratory chain. The immediate electron acceptor for the enzyme is believed to be ubiquinone. The sequence is that of NADH-ubiquinone oxidoreductase chain 6 (MT-ND6) from Calidris maritima (Purple sandpiper).